The primary structure comprises 519 residues: Bifunctional NAD(P)H-hydrate repair enzyme Nnr (519 aa).

The interval methionine 1–isoleucine 233 is NAD(P)H-hydrate epimerase. Residues methionine 25 to isoleucine 233 enclose the YjeF N-terminal domain. Residues glycine 71 to aspartate 75 form an NADPHX 1; for epimerase activity region. Positions 72 and 144 each coordinate K(+). The NADPHX 1; for epimerase activity stretch occupies residues glycine 148–serine 154. Aspartate 177 lines the (6S)-NADPHX pocket. Serine 180 contacts K(+). The YjeF C-terminal domain maps to methionine 235–glycine 515. Residues methionine 235 to phenylalanine 519 form an ADP-dependent (S)-NAD(P)H-hydrate dehydratase region. Glycine 338 is a binding site for (6S)-NADPHX. Residues histidine 389–serine 395 form an NADPHX 2; for dehydratase activity region. ADP contacts are provided by residues lysine 428 to aspartate 432 and cysteine 447 to glycine 456. Aspartate 457 is a (6S)-NADPHX binding site.

The protein in the N-terminal section; belongs to the NnrE/AIBP family. It in the C-terminal section; belongs to the NnrD/CARKD family. The cofactor is K(+).

It carries out the reaction (6S)-NADHX + ADP = AMP + phosphate + NADH + H(+). The catalysed reaction is (6S)-NADPHX + ADP = AMP + phosphate + NADPH + H(+). The enzyme catalyses (6R)-NADHX = (6S)-NADHX. It catalyses the reaction (6R)-NADPHX = (6S)-NADPHX. In terms of biological role, bifunctional enzyme that catalyzes the epimerization of the S- and R-forms of NAD(P)HX and the dehydration of the S-form of NAD(P)HX at the expense of ADP, which is converted to AMP. This allows the repair of both epimers of NAD(P)HX, a damaged form of NAD(P)H that is a result of enzymatic or heat-dependent hydration. In Methanothermobacter thermautotrophicus (strain ATCC 29096 / DSM 1053 / JCM 10044 / NBRC 100330 / Delta H) (Methanobacterium thermoautotrophicum), this protein is Bifunctional NAD(P)H-hydrate repair enzyme Nnr (nnr).